The chain runs to 365 residues: tRNA/tmRNA (uracil-C(5))-methyltransferase (365 aa).

5 residues coordinate S-adenosyl-L-methionine: glutamine 189, tyrosine 217, asparagine 222, glutamate 238, and aspartate 298. The active-site Nucleophile is the cysteine 323. Glutamate 357 functions as the Proton acceptor in the catalytic mechanism.

The protein belongs to the class I-like SAM-binding methyltransferase superfamily. RNA M5U methyltransferase family. TrmA subfamily.

The catalysed reaction is uridine(54) in tRNA + S-adenosyl-L-methionine = 5-methyluridine(54) in tRNA + S-adenosyl-L-homocysteine + H(+). The enzyme catalyses uridine(341) in tmRNA + S-adenosyl-L-methionine = 5-methyluridine(341) in tmRNA + S-adenosyl-L-homocysteine + H(+). In terms of biological role, dual-specificity methyltransferase that catalyzes the formation of 5-methyluridine at position 54 (m5U54) in all tRNAs, and that of position 341 (m5U341) in tmRNA (transfer-mRNA). The protein is tRNA/tmRNA (uracil-C(5))-methyltransferase of Shewanella loihica (strain ATCC BAA-1088 / PV-4).